We begin with the raw amino-acid sequence, 338 residues long: Glycerol-3-phosphate dehydrogenase [NAD(P)+] (338 aa).

Positions 13, 14, and 108 each coordinate NADPH. Positions 108, 139, and 141 each coordinate sn-glycerol 3-phosphate. An NADPH-binding site is contributed by alanine 143. The sn-glycerol 3-phosphate site is built by lysine 194, aspartate 247, serine 257, arginine 258, and asparagine 259. The Proton acceptor role is filled by lysine 194. Arginine 258 contacts NADPH. NADPH contacts are provided by valine 282 and glutamate 284.

The protein belongs to the NAD-dependent glycerol-3-phosphate dehydrogenase family.

It is found in the cytoplasm. The enzyme catalyses sn-glycerol 3-phosphate + NAD(+) = dihydroxyacetone phosphate + NADH + H(+). The catalysed reaction is sn-glycerol 3-phosphate + NADP(+) = dihydroxyacetone phosphate + NADPH + H(+). It participates in membrane lipid metabolism; glycerophospholipid metabolism. Its function is as follows. Catalyzes the reduction of the glycolytic intermediate dihydroxyacetone phosphate (DHAP) to sn-glycerol 3-phosphate (G3P), the key precursor for phospholipid synthesis. This chain is Glycerol-3-phosphate dehydrogenase [NAD(P)+], found in Streptococcus uberis (strain ATCC BAA-854 / 0140J).